The primary structure comprises 162 residues: 3-hydroxyacyl-[acyl-carrier-protein] dehydratase FabZ (162 aa).

Residue His49 is part of the active site.

Belongs to the thioester dehydratase family. FabZ subfamily.

It is found in the cytoplasm. The catalysed reaction is a (3R)-hydroxyacyl-[ACP] = a (2E)-enoyl-[ACP] + H2O. Involved in unsaturated fatty acids biosynthesis. Catalyzes the dehydration of short chain beta-hydroxyacyl-ACPs and long chain saturated and unsaturated beta-hydroxyacyl-ACPs. The protein is 3-hydroxyacyl-[acyl-carrier-protein] dehydratase FabZ of Solibacter usitatus (strain Ellin6076).